The following is a 520-amino-acid chain: Cytochrome P450 4F2 (520 aa).

The propeptide occupies 1 to 4 (MSQL). 2 residues coordinate heme: Glu328 and Cys468.

This sequence belongs to the cytochrome P450 family. Requires heme as cofactor. Liver. Also present in kidney: specifically expressed in the S2 and S3 segments of proximal tubules in cortex and outer medulla.

Its subcellular location is the microsome membrane. The protein localises to the endoplasmic reticulum membrane. The enzyme catalyses an organic molecule + reduced [NADPH--hemoprotein reductase] + O2 = an alcohol + oxidized [NADPH--hemoprotein reductase] + H2O + H(+). It carries out the reaction (5Z,8Z,11Z,14Z)-eicosatetraenoate + reduced [NADPH--hemoprotein reductase] + O2 = 20-hydroxy-(5Z,8Z,11Z,14Z)-eicosatetraenoate + oxidized [NADPH--hemoprotein reductase] + H2O + H(+). It catalyses the reaction (5Z,8Z,11Z)-eicosatrienoate + reduced [NADPH--hemoprotein reductase] + O2 = 20-hydroxy-(5Z,8Z,11Z)-eicosatrienoate + oxidized [NADPH--hemoprotein reductase] + H2O + H(+). The catalysed reaction is (5Z,8Z,11Z,14Z,17Z)-eicosapentaenoate + reduced [NADPH--hemoprotein reductase] + O2 = 20-hydroxy-(5Z,8Z,11Z,14Z,17Z)-eicosapentaenoate + oxidized [NADPH--hemoprotein reductase] + H2O + H(+). The enzyme catalyses (4Z,7Z,10Z,13Z,16Z,19Z)-docosahexaenoate + reduced [NADPH--hemoprotein reductase] + O2 = 22-hydroxy-(4Z,7Z,10Z,13Z,16Z,19Z)-docosahexaenoate + oxidized [NADPH--hemoprotein reductase] + H2O + H(+). It carries out the reaction 8,9-epoxy-(5Z,11Z,14Z)-eicosatrienoate + reduced [NADPH--hemoprotein reductase] + O2 = 20-hydroxy-8,9-epoxy-(5Z,11Z,14Z)-eicosatrienoate + oxidized [NADPH--hemoprotein reductase] + H2O + H(+). It catalyses the reaction (9S,10R)-epoxy-octadecanoate + reduced [NADPH--hemoprotein reductase] + O2 = 18-hydroxy-(9S,10R)-epoxy-octadecanoate + oxidized [NADPH--hemoprotein reductase] + H2O + H(+). The catalysed reaction is (9R,10S)-epoxy-octadecanoate + reduced [NADPH--hemoprotein reductase] + O2 = 18-hydroxy-(9R,10S)-epoxy-octadecanoate + oxidized [NADPH--hemoprotein reductase] + H2O + H(+). The enzyme catalyses 12,13-epoxy-(9Z)-octadecenoate + reduced [NADPH--hemoprotein reductase] + O2 = 18-hydroxy-12,13-epoxy-(9Z)-octadecenoate + oxidized [NADPH--hemoprotein reductase] + H2O + H(+). It carries out the reaction 9,10-epoxy-(12Z)-octadecenoate + reduced [NADPH--hemoprotein reductase] + O2 = 18-hydroxy-9,10-epoxy-(12Z)-octadecenoate + oxidized [NADPH--hemoprotein reductase] + H2O + H(+). It catalyses the reaction 8-hydroxy-(5Z,9E,11Z,14Z)-eicosatetraenoate + reduced [NADPH--hemoprotein reductase] + O2 = 8,20-dihydroxy-(5Z,9E,11Z,14Z)-eicosatetraenoate + oxidized [NADPH--hemoprotein reductase] + H2O + H(+). The catalysed reaction is 12-hydroxy-(5Z,8Z,10E,14Z)-eicosatetraenoate + reduced [NADPH--hemoprotein reductase] + O2 = 12,20-dihydroxy-(5Z,8Z,10E,14Z)-eicosatetraenoate + oxidized [NADPH--hemoprotein reductase] + H2O + H(+). The enzyme catalyses 12-hydroxyoctadecanoate + reduced [NADPH--hemoprotein reductase] + O2 = 12,18-dihydroxyoctadecanoate + oxidized [NADPH--hemoprotein reductase] + H2O + H(+). It carries out the reaction docosanoate + reduced [NADPH--hemoprotein reductase] + O2 = 22-hydroxydocosanoate + oxidized [NADPH--hemoprotein reductase] + H2O + H(+). It catalyses the reaction 22-hydroxydocosanoate + reduced [NADPH--hemoprotein reductase] + O2 = 22-oxodocosanoate + oxidized [NADPH--hemoprotein reductase] + 2 H2O + H(+). The catalysed reaction is 22-oxodocosanoate + reduced [NADPH--hemoprotein reductase] + O2 = docosanedioate + oxidized [NADPH--hemoprotein reductase] + H2O + 2 H(+). The enzyme catalyses tetracosanoate + reduced [NADPH--hemoprotein reductase] + O2 = 24-hydroxytetracosanoate + oxidized [NADPH--hemoprotein reductase] + H2O + H(+). It carries out the reaction hexacosanoate + reduced [NADPH--hemoprotein reductase] + O2 = 26-hydroxyhexacosanoate + oxidized [NADPH--hemoprotein reductase] + H2O + H(+). It catalyses the reaction 26-hydroxyhexacosanoate + reduced [NADPH--hemoprotein reductase] + O2 = 26-oxohexacosanoate + oxidized [NADPH--hemoprotein reductase] + 2 H2O + H(+). The catalysed reaction is 26-oxohexacosanoate + reduced [NADPH--hemoprotein reductase] + O2 = hexacosanedioate + oxidized [NADPH--hemoprotein reductase] + H2O + 2 H(+). The enzyme catalyses 3-hydroxyoctadecanoate + reduced [NADPH--hemoprotein reductase] + O2 = 3,18-dihydroxyoctadecanoate + oxidized [NADPH--hemoprotein reductase] + H2O + H(+). It carries out the reaction 3-hydroxyhexadecanoate + reduced [NADPH--hemoprotein reductase] + O2 = 3,16-dihydroxyhexadecanoate + oxidized [NADPH--hemoprotein reductase] + H2O + H(+). It catalyses the reaction leukotriene B4 + reduced [NADPH--hemoprotein reductase] + O2 = 20-hydroxy-leukotriene B4 + oxidized [NADPH--hemoprotein reductase] + H2O + H(+). The catalysed reaction is 6-trans-leukotriene B4 + reduced [NADPH--hemoprotein reductase] + O2 = 20-hydroxy-6-trans-leukotriene B4 + oxidized [NADPH--hemoprotein reductase] + H2O + H(+). The enzyme catalyses lipoxin A4 + reduced [NADPH--hemoprotein reductase] + O2 = 20-hydroxy-lipoxin A4 + oxidized [NADPH--hemoprotein reductase] + H2O + H(+). It carries out the reaction menaquinone-4 + reduced [NADPH--hemoprotein reductase] + O2 = omega-hydroxymenaquinone-4 + oxidized [NADPH--hemoprotein reductase] + H2O + H(+). It catalyses the reaction phylloquinone + reduced [NADPH--hemoprotein reductase] + O2 = omega-hydroxyphylloquinone + oxidized [NADPH--hemoprotein reductase] + H2O + H(+). The catalysed reaction is (+)-alpha-tocopherol + reduced [NADPH--hemoprotein reductase] + O2 = 13-hydroxy-alpha-tocopherol + oxidized [NADPH--hemoprotein reductase] + H2O + H(+). The enzyme catalyses gamma-tocopherol + NADPH + O2 + H(+) = 13-hydroxy-gamma-tocopherol + NADP(+) + H2O. It participates in lipid metabolism; arachidonate metabolism. The protein operates within lipid metabolism; leukotriene B4 degradation. Its pathway is cofactor degradation; phylloquinone degradation. With respect to regulation, inhibited by dietary sesamin. A cytochrome P450 monooxygenase involved in the metabolism of various endogenous substrates, including fatty acids, eicosanoids and vitamins. Mechanistically, uses molecular oxygen inserting one oxygen atom into a substrate, and reducing the second into a water molecule, with two electrons provided by NADPH via cytochrome P450 reductase (CPR; NADPH-ferrihemoprotein reductase). Catalyzes predominantly the oxidation of the terminal carbon (omega-oxidation) of long- and very long-chain fatty acids. Displays high omega-hydroxylase activity toward polyunsaturated fatty acids (PUFAs). Participates in the conversion of arachidonic acid to omega-hydroxyeicosatetraenoic acid (20-HETE), a signaling molecule acting both as vasoconstrictive and natriuretic with overall effect on arterial blood pressure. Plays a role in the oxidative inactivation of eicosanoids, including both pro-inflammatory and anti-inflammatory mediators such as leukotriene B4 (LTB4), lipoxin A4 (LXA4), and several HETEs. Catalyzes omega-hydroxylation of 3-hydroxy fatty acids. Converts monoepoxides of linoleic acid leukotoxin and isoleukotoxin to omega-hydroxylated metabolites. Contributes to the degradation of very long-chain fatty acids (VLCFAs) by catalyzing successive omega-oxidations and chain shortening. Plays an important role in vitamin metabolism by chain shortening. Catalyzes omega-hydroxylation of the phytyl chain of tocopherols (forms of vitamin E), with preference for gamma-tocopherols over alpha-tocopherols, thus promoting retention of alpha-tocopherols in tissues. Omega-hydroxylates and inactivates phylloquinone (vitamin K1), and menaquinone-4 (MK-4, a form of vitamin K2), both acting as cofactors in blood coagulation. This is Cytochrome P450 4F2 from Homo sapiens (Human).